A 419-amino-acid polypeptide reads, in one-letter code: eIF5-mimic protein 2-A (419 aa).

Residues 1–15 (MNNQKQQKPTLTGQR) are compositionally biased toward polar residues. The tract at residues 1–29 (MNNQKQQKPTLTGQRFKTRKRDEKERFDP) is disordered. The region spanning 247–414 (NQQSIGARKE…KNAEEESESE (168 aa)) is the W2 domain.

It belongs to the BZW family.

Functionally, translation initiation regulator which may repress repeat-associated non-AUG (RAN) initiated translation probably by acting as a competitive inhibitor of eukaryotic translation initiation factor 5 (EIF5) function. Enhances histone H4 gene transcription but does not seem to bind DNA directly. This Danio rerio (Zebrafish) protein is eIF5-mimic protein 2-A (bzw1a).